The chain runs to 163 residues: Neurotrophin-3 (163 aa).

The N-terminal stretch at 1-3 (IQS) is a signal peptide. Residues 4-119 (TSMDQGILTE…VLNRTSRRKR (116 aa)) constitute a propeptide that is removed on maturation. Residue asparagine 112 is glycosylated (N-linked (GlcNAc...) asparagine). Residues 114–133 (TSRRKREGKSHRGEYSVCDS) are disordered. The segment covering 123 to 133 (SHRGEYSVCDS) has biased composition (basic and acidic residues).

Belongs to the NGF-beta family.

It localises to the secreted. Seems to promote the survival of visceral and proprioceptive sensory neurons. This chain is Neurotrophin-3 (NTF3), found in Lichanura trivirgata (Rosy boa).